The chain runs to 324 residues: Homoserine kinase (324 aa).

Residue 100–110 (PLSSGMGSSAA) participates in ATP binding.

Belongs to the GHMP kinase family. Homoserine kinase subfamily.

Its subcellular location is the cytoplasm. The catalysed reaction is L-homoserine + ATP = O-phospho-L-homoserine + ADP + H(+). It functions in the pathway amino-acid biosynthesis; L-threonine biosynthesis; L-threonine from L-aspartate: step 4/5. Its function is as follows. Catalyzes the ATP-dependent phosphorylation of L-homoserine to L-homoserine phosphate. This chain is Homoserine kinase, found in Chlorobaculum tepidum (strain ATCC 49652 / DSM 12025 / NBRC 103806 / TLS) (Chlorobium tepidum).